A 1184-amino-acid chain; its full sequence is MHGHRASASAIHPDYPVTHRESTWRRATLIVQGSTATVDDTLRPAVPARGLQAAEIAREIATEIATAVAEVVTTVTVLEIDVTTAETTAAMTVETTAETAAAHVHHPVARGHRTAEMIVTAETTAGTTAGTTVAMIGTGVEVPRHVGQARDVLQPHRPRTSAATREERVNPEKQKEDKLAERAAKLLEWKKRKEAERLAQEKAGTPGSGASPAGSVPSTPAVAATPPPREAKPTVAKSKVPKPATEKVKQKQPEKSSFKLDESAAARPLIAKPAGKPVAIAAASKYHHIDYKCSNQLTQTDGAAAAATTKANGNIGSFGLKTKSTAEEDISSKALLDDEIDTGKRKLQALPVFATHDEPETTAGVEDDAAMSDIGTDDDETNAQLQAKLQSRRAELSHDQAADKDTNMEEVPTADNTGDQMDVDDNAGAEEDDVDPLDAFMADLSVPQQPSRAAPQGETMFNDDLEPEQTAVEGEDLLALRAAKKKKKEVPTINHEKVEYEPFRKDFYTEPAEITQMSAEDVADLRHELDGIKVKPDDVPRPVTKWAQMGLLQQTMDVFTRVGYARPTAIQAQAIPIAESGRDLIGVAKTGSGKTLAFGIPMIRHVLDQRPLKPADGPIGLILAPTRELSLQIVNELKPFLNASGITIKCAYGGQPISDQIAMIKRGGIHILCATAGRLIDLLQSNSGRVLSFRRITYVVLDEADRMFDMGFEPQVMKILASIRPDRQTILFSATFPKTMAALARKALDKPAEVIIGGRSKVAPEITQHITIVPPSYEKKIAKLLHHLGQTFSDDENAQVLIFTERQETAEDLLSKLFKAKYFAVNTIHGAKDQTDRNEAINEFKQGLLNILIATSVAARGLDVPGLALVYNFDCPTHLEDYVHRCGRTGRAGNKGLAVTLIENPGQERFAVHIVKALKESGAEVPDDLQAMANAFHEKVKSGTEKYYNVGFKGKGLDELDASRALDKKREKRALKLGDDDASDDEPDLPKLKKPEASGPGVAKSTNGDAAAEPVQDEPAWKKLLLGKIVVNKTERAETGKPTTAKERAMAAARKIDGNLSRKGTVHAGQPIDNKGPDAGLYHSTLEINDFPQKARWAVTNRTNVAKILDATGVSITTKGNFYGPGKEPGETDLPKLYILVEGDTEGVVTQAMLELTRLLTDATVAAEEAASTRGPTGRYSVMS.

Disordered stretches follow at residues 148-178, 197-262, 356-377, and 389-433; these read QARD…KEDK, RLAQ…KLDE, HDEP…IGTD, and LQSR…EEDD. Residues 164 to 178 show a composition bias toward basic and acidic residues; that stretch reads TREERVNPEKQKEDK. Over residues 203 to 224 the composition is skewed to low complexity; the sequence is AGTPGSGASPAGSVPSTPAVAA. The segment covering 244-262 has biased composition (basic and acidic residues); the sequence is ATEKVKQKQPEKSSFKLDE. The segment covering 365–377 has biased composition (acidic residues); that stretch reads VEDDAAMSDIGTD. Positions 392–407 are enriched in basic and acidic residues; it reads RRAELSHDQAADKDTN. A compositionally biased stretch (acidic residues) spans 421 to 433; sequence MDVDDNAGAEEDD. The Q motif signature appears at 544 to 572; sequence TKWAQMGLLQQTMDVFTRVGYARPTAIQA. Residues 575 to 754 enclose the Helicase ATP-binding domain; the sequence is IPIAESGRDL…RKALDKPAEV (180 aa). ATP is bound at residue 588 to 595; that stretch reads AKTGSGKT. The short motif at 702–705 is the DEAD box element; it reads DEAD. In terms of domain architecture, Helicase C-terminal spans 780–933; it reads KIAKLLHHLG…EVPDDLQAMA (154 aa). Residues 973-1016 are disordered; sequence RALKLGDDDASDDEPDLPKLKKPEASGPGVAKSTNGDAAAEPVQ.

The protein belongs to the DEAD box helicase family. DDX46/PRP5 subfamily.

It localises to the nucleus. The enzyme catalyses ATP + H2O = ADP + phosphate + H(+). ATP-dependent RNA helicase involved spliceosome assembly and in nuclear splicing. Catalyzes an ATP-dependent conformational change of U2 snRNP. Bridges U1 and U2 snRNPs and enables stable U2 snRNP association with intron RNA. In Phaeosphaeria nodorum (strain SN15 / ATCC MYA-4574 / FGSC 10173) (Glume blotch fungus), this protein is Pre-mRNA-processing ATP-dependent RNA helicase PRP5 (PRP5).